Reading from the N-terminus, the 323-residue chain is ADP-L-glycero-D-manno-heptose-6-epimerase (323 aa).

NADP(+) is bound by residues Phe-10–Ile-11, Asp-31–Asn-32, Lys-38, Arg-53, Met-75–Ser-79, and Asn-92. The active-site Proton acceptor is the Tyr-143. Lys-147 is an NADP(+) binding site. Asn-170 is a binding site for substrate. The NADP(+) site is built by Val-171 and Lys-179. The active-site Proton acceptor is the Lys-179. Substrate-binding positions include Asp-181, Lys-188, Phe-202 to Cys-205, Arg-216, and Tyr-281.

It belongs to the NAD(P)-dependent epimerase/dehydratase family. HldD subfamily. Homopentamer. NADP(+) serves as cofactor.

The enzyme catalyses ADP-D-glycero-beta-D-manno-heptose = ADP-L-glycero-beta-D-manno-heptose. It functions in the pathway nucleotide-sugar biosynthesis; ADP-L-glycero-beta-D-manno-heptose biosynthesis; ADP-L-glycero-beta-D-manno-heptose from D-glycero-beta-D-manno-heptose 7-phosphate: step 4/4. Its function is as follows. Catalyzes the interconversion between ADP-D-glycero-beta-D-manno-heptose and ADP-L-glycero-beta-D-manno-heptose via an epimerization at carbon 6 of the heptose. The sequence is that of ADP-L-glycero-D-manno-heptose-6-epimerase from Nitratidesulfovibrio vulgaris (strain ATCC 29579 / DSM 644 / CCUG 34227 / NCIMB 8303 / VKM B-1760 / Hildenborough) (Desulfovibrio vulgaris).